We begin with the raw amino-acid sequence, 292 residues long: MAAHKITTTLSIFFLLSSIFRSSDAAGIAIYWGQNGNEGSLASTCATGNYEFVNIAFLSSFGSGQAPVLNLAGHCNPDNNGCAFLSDEINSCKSQNVKVLLSIGGGAGSYSLSSADDAKQVANFIWNSYLGGQSDSRPLGAAVLDGVDFDIESGSGQFWDVLAQELKNFGQVILSAAPQCPIPDAHLDAAIKTGLFDSVWVQFYNNPPCMFADNADNLLSSWNQWTAFPTSKLYMGLPAAREAAPSGGFIPADVLISQVLPTIKASSNYGGVMLWSKAFDNGYSDSIKGSIG.

The signal sequence occupies residues 1–25 (MAAHKITTTLSIFFLLSSIFRSSDA). In terms of domain architecture, GH18 spans 26–292 (AGIAIYWGQN…YSDSIKGSIG (267 aa)). 2 cysteine pairs are disulfide-bonded: C45–C92 and C75–C82. Catalysis depends on E152, which acts as the Proton donor. A disulfide bridge links C180 with C209.

The protein belongs to the glycosyl hydrolase 18 family. Chitinase class II subfamily.

It is found in the secreted. Its subcellular location is the extracellular space. The catalysed reaction is Random endo-hydrolysis of N-acetyl-beta-D-glucosaminide (1-&gt;4)-beta-linkages in chitin and chitodextrins.. Functionally, this protein functions as a defense against chitin containing fungal pathogens. This Cucumis sativus (Cucumber) protein is Acidic endochitinase.